A 340-amino-acid polypeptide reads, in one-letter code: Spermidine synthase 2 (340 aa).

A disordered region spans residues 1 to 41 (MSSTQEASVTDLPVKRPREAEEDNNGGAMETENGGGEIKEP). Position 2 is an N-acetylserine (serine 2). In terms of domain architecture, PABS spans 49 to 286 (PGWFSEISPM…GVIGFMLCSS (238 aa)). Glutamine 80 lines the S-adenosyl 3-(methylsulfanyl)propylamine pocket. Position 110 (tyrosine 110) interacts with putrescine. Residues glutamine 111, aspartate 135, glutamate 155, 186–187 (DG), and aspartate 205 each bind S-adenosyl 3-(methylsulfanyl)propylamine. Aspartate 205 functions as the Proton acceptor in the catalytic mechanism. Residues 205 to 208 (DSSD) and tyrosine 274 each bind putrescine.

It belongs to the spermidine/spermine synthase family. In terms of assembly, heterodimer. Component of a multiprotein complex. Interacts with SPMS and SPDSYN1.

The enzyme catalyses S-adenosyl 3-(methylsulfanyl)propylamine + putrescine = S-methyl-5'-thioadenosine + spermidine + H(+). Its pathway is amine and polyamine biosynthesis; spermidine biosynthesis; spermidine from putrescine: step 1/1. This Arabidopsis thaliana (Mouse-ear cress) protein is Spermidine synthase 2 (SPDSYN2).